We begin with the raw amino-acid sequence, 714 residues long: Sodium-dependent acetylcholine transporter (714 aa).

Positions 1–21 (MSVSSNDPEQRNGRGMASGNN) are disordered. Residues 1 to 74 (MSVSSNDPEQ…GNWSNKSDYL (74 aa)) are Cytoplasmic-facing. 3 helical membrane passes run 75 to 95 (LAVI…FLVF), 100 to 120 (AAFL…MFFM), and 152 to 172 (ISGF…FYLI). The Extracellular portion of the chain corresponds to 173 to 257 (NSFSFSIPWS…LSKGVDDFGT (85 aa)). 4 N-linked (GlcNAc...) asparagine glycosylation sites follow: asparagine 192, asparagine 205, asparagine 211, and asparagine 222. 9 helical membrane passes run 258–278 (LNWY…LCLF), 287–307 (VVYV…TRLL), 336–356 (AAVQ…TIAS), 368–388 (IWLV…LTFS), 422–442 (AGVS…LLVV), 476–496 (VCAL…LFWM), 502–522 (FVLT…INWV), 548–568 (ILFK…LWLD), and 584–604 (ILTA…VGIW). Residues 605 to 714 (QFCIAKGTIT…IPKFERETAI (110 aa)) are Cytoplasmic-facing.

This sequence belongs to the sodium:neurotransmitter symporter (SNF) (TC 2.A.22) family. Interacts with stn-1; part of the DGC. As to expression, body wall, and vulval and enteric muscles.

The protein localises to the cell membrane. It is found in the postsynaptic cell membrane. Its function is as follows. Mediates sodium-dependent uptake of acetylcholine at neuromuscular junctions during periods of increased synaptic activity, may also prevent spillover to adjacent synaptic sites. Not involved in the uptake of other neurotransmitters (GABA, glycine, proline and glutamate) and there was also no inhibition of uptake by adding an excess of other candidate substrates (GABA, glycine, taurine, creatine, proline, alanine, carnitine, glutamate and betaine). Required for muscle integrity; altered transport of acetylcholine due to loss of dystrophin-glycoprotein complex (DGC) function results in muscle degeneration. This is Sodium-dependent acetylcholine transporter from Caenorhabditis elegans.